Reading from the N-terminus, the 350-residue chain is Probable DNA polymerase III subunit delta (350 aa).

It belongs to the DNA polymerase HolA subunit family. In terms of assembly, component of the DNA clamp loading complex consisting of tau(3):delta(1):delta'(1). The DNA polymerase III holoenzyme complex contains at least 10 different subunits organized into 3 functionally essential subassemblies: the Pol III core, the beta sliding clamp processivity factor and the clamp-loading complex. The Pol III core (subunits alpha, epsilon and theta) contains the polymerase and the 3'-5' exonuclease proofreading activities. The polymerase is tethered to the template via the dimeric beta sliding clamp processivity factor. The DNA clamp-loading complex assembles the beta sliding clamp onto the primed template and plays a central role in the organization and communication at the replication fork.

It catalyses the reaction DNA(n) + a 2'-deoxyribonucleoside 5'-triphosphate = DNA(n+1) + diphosphate. Functionally, part of the beta sliding clamp loading complex, which hydrolyzes ATP to load the beta clamp onto primed DNA to form the DNA replication pre-initiation complex. DNA polymerase III is a complex, multichain enzyme responsible for most of the replicative synthesis in bacteria. This DNA polymerase also exhibits 3'-5' exonuclease activity. The delta subunit is the wrench that will open the beta subunit dimer. The DNA clamp loading complex (tau(3),delta,delta') is thought to load beta dimers onto DNA by binding ATP which alters the complex's conformation so it can bind beta sliding clamp dimers and open them at one interface. Primed DNA is recognized, ATP is hydrolyzed releasing the clamp loading complex and closing the beta sliding clamp ring around the primed DNA. This Aquifex aeolicus (strain VF5) protein is Probable DNA polymerase III subunit delta.